Consider the following 152-residue polypeptide: ALK and LTK ligand 1 (152 aa).

Residues M1 to C23 form the signal peptide. Cystine bridges form between C113-C149 and C127-C136.

The protein belongs to the ALKAL family. Expressed at low level in the notochord and iridophore stripes, the eye and the swim bladder.

It localises to the secreted. The protein localises to the cell membrane. In terms of biological role, cytokine that acts as a physiological ligand for receptor tyrosine kinases LTK and ALK. Required for iridophore development in the adult eye by acting as a receptor for LTK. This Danio rerio (Zebrafish) protein is ALK and LTK ligand 1.